Reading from the N-terminus, the 682-residue chain is Potassium-transporting ATPase ATP-binding subunit (682 aa).

4 helical membrane-spanning segments follow: residues 34-54 (PVMF…LAMV), 58-78 (IAGS…TVLF), 219-239 (IALT…TATL), and 254-274 (VLVA…LSAI). Asp307 acts as the 4-aspartylphosphate intermediate in catalysis. ATP is bound by residues Asp344, Glu348, 377–384 (FTAQSRMS), and Lys395. Residues Asp518 and Asp522 each contribute to the Mg(2+) site. 3 consecutive transmembrane segments (helical) span residues 588 to 608 (FAII…LNVM), 616 to 636 (AILS…PLAL), and 662 to 682 (LVVP…LGLA).

Belongs to the cation transport ATPase (P-type) (TC 3.A.3) family. Type IA subfamily. In terms of assembly, the system is composed of three essential subunits: KdpA, KdpB and KdpC.

It localises to the cell inner membrane. It catalyses the reaction K(+)(out) + ATP + H2O = K(+)(in) + ADP + phosphate + H(+). Its function is as follows. Part of the high-affinity ATP-driven potassium transport (or Kdp) system, which catalyzes the hydrolysis of ATP coupled with the electrogenic transport of potassium into the cytoplasm. This subunit is responsible for energy coupling to the transport system and for the release of the potassium ions to the cytoplasm. The protein is Potassium-transporting ATPase ATP-binding subunit of Salmonella typhimurium (strain LT2 / SGSC1412 / ATCC 700720).